A 250-amino-acid chain; its full sequence is Keratin-associated protein 9-1 (250 aa).

32 tandem repeats follow at residues 8-12 (CCQPT), 13-17 (CCRTT), 18-22 (CCRTT), 37-41 (CCQPS), 42-46 (CCVPS), 51-55 (CCHPT), 56-60 (CCQNT), 61-65 (CCRTT), 66-70 (CCQPT), 75-79 (CCQPS), 80-84 (CCSTP), 85-89 (CCQPT), 90-94 (CCGSS), 95-99 (CCGQT), 105-109 (CCQPI), 114-117 (CCQP), 118-121 (CCHP), 133-137 (CCQPT), 138-142 (CCQPT), 143-147 (CCRNT), 153-157 (CCGSS), 162-166 (CCHPT), 167-171 (CCQTI), 176-180 (CCQPS), 185-189 (CCSTP), 190-194 (CCQPT), 214-218 (CCRPT), 219-223 (CCQTT), 229-233 (CCRPS), 234-238 (CCCSP), 239-243 (CCVSS), and 244-248 (CCQPS). The tract at residues 8-248 (CCQPTCCRTT…CCVSSCCQPS (241 aa)) is 32 X 5 AA repeats of C-C-[CGSVRQH]-[SQTNP]-[PTSI].

Belongs to the KRTAP type 9 family. In terms of assembly, interacts with hair keratins.

In terms of biological role, in the hair cortex, hair keratin intermediate filaments are embedded in an interfilamentous matrix, consisting of hair keratin-associated proteins (KRTAP), which are essential for the formation of a rigid and resistant hair shaft through their extensive disulfide bond cross-linking with abundant cysteine residues of hair keratins. The matrix proteins include the high-sulfur and high-glycine-tyrosine keratins. This is Keratin-associated protein 9-1 from Homo sapiens (Human).